A 208-amino-acid chain; its full sequence is MPTVHVFARDHINTDEIIPARHLTTDVESELAKYAMEDYDKDFVRRVQPGDIIVAGADFGCGSSREHAVWALRGAGVSAVIAPNFARIYYRNSINNGFLALECEGITELFQDGEEAELDLKGGTIRNPRTGKELSFVPVPQFALDVQKAGGWLEYMKAGEDVEGERLDNASTSAGHGHAGTPLGDDPAKEDGPRPEQASGHQKEEHHA.

The disordered stretch occupies residues 163–208; that stretch reads EGERLDNASTSAGHGHAGTPLGDDPAKEDGPRPEQASGHQKEEHHA.

The protein belongs to the LeuD family. LeuD type 2 subfamily. Heterodimer of LeuC and LeuD.

The enzyme catalyses (2R,3S)-3-isopropylmalate = (2S)-2-isopropylmalate. It participates in amino-acid biosynthesis; L-leucine biosynthesis; L-leucine from 3-methyl-2-oxobutanoate: step 2/4. Its function is as follows. Catalyzes the isomerization between 2-isopropylmalate and 3-isopropylmalate, via the formation of 2-isopropylmaleate. This is 3-isopropylmalate dehydratase small subunit 2 (leuD2) from Deinococcus radiodurans (strain ATCC 13939 / DSM 20539 / JCM 16871 / CCUG 27074 / LMG 4051 / NBRC 15346 / NCIMB 9279 / VKM B-1422 / R1).